The primary structure comprises 150 residues: Arginine repressor (150 aa).

Belongs to the ArgR family.

The protein resides in the cytoplasm. It participates in amino-acid biosynthesis; L-arginine biosynthesis [regulation]. Its function is as follows. Regulates arginine biosynthesis genes. In Desulfitobacterium hafniense (strain DSM 10664 / DCB-2), this protein is Arginine repressor.